A 192-amino-acid chain; its full sequence is Signal peptidase complex catalytic subunit sec11 (192 aa).

The Cytoplasmic segment spans residues 1–18 (MLSFLSSNLSSTRQSLAQ). Residues 19 to 39 (VLNFALVLSTAFMLWKGLSVF) traverse the membrane as a helical; Signal-anchor for type II membrane protein segment. At 40–192 (TASSSPIVVV…GLMVILQREQ (153 aa)) the chain is on the lumenal side. Catalysis depends on charge relay system residues serine 53, histidine 92, and aspartate 133. Residues 177-188 (VLLGIMGLMVIL) form a C-terminal short (CTS) helix region.

It belongs to the peptidase S26B family. As to quaternary structure, component of the signal peptidase complex (SPC) composed of a catalytic subunit SEC11 and three accessory subunits SPC1, SPC2 and SPC3. The complex induces a local thinning of the ER membrane which is used to measure the length of the signal peptide (SP) h-region of protein substrates. This ensures the selectivity of the complex towards h-regions shorter than 18-20 amino acids. SPC associates with the translocon complex.

Its subcellular location is the endoplasmic reticulum membrane. The enzyme catalyses Cleavage of hydrophobic, N-terminal signal or leader sequences from secreted and periplasmic proteins.. Catalytic component of the signal peptidase complex (SPC) which catalyzes the cleavage of N-terminal signal sequences from nascent proteins as they are translocated into the lumen of the endoplasmic reticulum. Specifically cleaves N-terminal signal peptides that contain a hydrophobic alpha-helix (h-region) shorter than 18-20 amino acids. This is Signal peptidase complex catalytic subunit sec11 (sec11) from Neosartorya fischeri (strain ATCC 1020 / DSM 3700 / CBS 544.65 / FGSC A1164 / JCM 1740 / NRRL 181 / WB 181) (Aspergillus fischerianus).